The chain runs to 161 residues: Nucleotide-binding protein XOO0647 (161 aa).

This sequence belongs to the YajQ family.

In terms of biological role, nucleotide-binding protein. This chain is Nucleotide-binding protein XOO0647, found in Xanthomonas oryzae pv. oryzae (strain MAFF 311018).